Here is a 1025-residue protein sequence, read N- to C-terminus: Leucyl-cystinyl aminopeptidase (1025 aa).

Met-1 carries the N-acetylmethionine modification. At 1 to 109 (METFTNDRLQ…DGTCSVPSAR (109 aa)) the chain is on the cytoplasmic side. The Dileucine internalization motif signature appears at 53 to 54 (LL). Tyr-70 bears the Phosphotyrosine mark. Residues 76–77 (LL) carry the Dileucine internalization motif motif. A phosphoserine; by PKC/PRKCZ; in vitro mark is found at Ser-80 and Ser-91. The segment at 96–101 (RQSPDG) is tankyrase binding. The chain crosses the membrane as a helical; Signal-anchor for type II membrane protein span at residues 110–131 (TLVICVFVIVVAVSVIMVIYLL). The Extracellular segment spans residues 132–1025 (PRCTFTKEGC…RNLKTLTLWL (894 aa)). N-linked (GlcNAc...) asparagine glycans are attached at residues Asn-145, Asn-184, Asn-215, Asn-256, and Asn-266. A substrate-binding site is contributed by Glu-295. 2 N-linked (GlcNAc...) asparagine glycosylation sites follow: Asn-368 and Asn-374. 428 to 432 (GAMEN) lines the substrate pocket. N-linked (GlcNAc...) asparagine glycosylation occurs at Asn-447. Zn(2+) is bound at residue His-464. Glu-465 (proton acceptor) is an active-site residue. The Zn(2+) site is built by His-468 and Glu-487. Asn-525, Asn-578, Asn-664, Asn-682, Asn-695, Asn-758, Asn-834, Asn-850, and Asn-989 each carry an N-linked (GlcNAc...) asparagine glycan.

The protein belongs to the peptidase M1 family. In terms of assembly, homodimer. Binds tankyrases 1 and 2. Zn(2+) serves as cofactor. N-glycosylated. As to expression, highly expressed in heart, brain, spleen, lung, kidney and white adipose tissue. Detected at lower levels in skeletal muscle and liver.

The protein localises to the cell membrane. Its subcellular location is the endomembrane system. It catalyses the reaction Release of an N-terminal amino acid, Cys-|-Xaa-, in which the half-cystine residue is involved in a disulfide loop, notably in oxytocin or vasopressin. Hydrolysis rates on a range of aminoacyl arylamides exceed that for the cystinyl derivative, however.. In terms of biological role, release of an N-terminal amino acid, cleave before cysteine, leucine as well as other amino acids. Degrades peptide hormones such as oxytocin, vasopressin and angiotensin III, and plays a role in maintaining homeostasis during pregnancy. May be involved in the inactivation of neuronal peptides in the brain. Cleaves Met-enkephalin and dynorphin. Binds angiotensin IV and may be the angiotensin IV receptor in the brain. This chain is Leucyl-cystinyl aminopeptidase (Lnpep), found in Rattus norvegicus (Rat).